A 113-amino-acid polypeptide reads, in one-letter code: Large ribosomal subunit protein bL17 (113 aa).

Belongs to the bacterial ribosomal protein bL17 family. Part of the 50S ribosomal subunit. Contacts protein L32.

This is Large ribosomal subunit protein bL17 from Clostridioides difficile (strain 630) (Peptoclostridium difficile).